A 406-amino-acid polypeptide reads, in one-letter code: Phosphopentomutase (406 aa).

The Mn(2+) site is built by Asp10, Asp305, His310, Asp346, His347, and His358.

This sequence belongs to the phosphopentomutase family. It depends on Mn(2+) as a cofactor.

Its subcellular location is the cytoplasm. It catalyses the reaction 2-deoxy-alpha-D-ribose 1-phosphate = 2-deoxy-D-ribose 5-phosphate. The enzyme catalyses alpha-D-ribose 1-phosphate = D-ribose 5-phosphate. It participates in carbohydrate degradation; 2-deoxy-D-ribose 1-phosphate degradation; D-glyceraldehyde 3-phosphate and acetaldehyde from 2-deoxy-alpha-D-ribose 1-phosphate: step 1/2. In terms of biological role, isomerase that catalyzes the conversion of deoxy-ribose 1-phosphate (dRib-1-P) and ribose 1-phosphate (Rib-1-P) to deoxy-ribose 5-phosphate (dRib-5-P) and ribose 5-phosphate (Rib-5-P), respectively. In Vibrio campbellii (strain ATCC BAA-1116), this protein is Phosphopentomutase.